The sequence spans 176 residues: Crossover junction endodeoxyribonuclease RuvC (176 aa).

Active-site residues include aspartate 10, glutamate 69, and aspartate 141. 3 residues coordinate Mg(2+): aspartate 10, glutamate 69, and aspartate 141.

This sequence belongs to the RuvC family. In terms of assembly, homodimer which binds Holliday junction (HJ) DNA. The HJ becomes 2-fold symmetrical on binding to RuvC with unstacked arms; it has a different conformation from HJ DNA in complex with RuvA. In the full resolvosome a probable DNA-RuvA(4)-RuvB(12)-RuvC(2) complex forms which resolves the HJ. Requires Mg(2+) as cofactor.

The protein resides in the cytoplasm. It catalyses the reaction Endonucleolytic cleavage at a junction such as a reciprocal single-stranded crossover between two homologous DNA duplexes (Holliday junction).. In terms of biological role, the RuvA-RuvB-RuvC complex processes Holliday junction (HJ) DNA during genetic recombination and DNA repair. Endonuclease that resolves HJ intermediates. Cleaves cruciform DNA by making single-stranded nicks across the HJ at symmetrical positions within the homologous arms, yielding a 5'-phosphate and a 3'-hydroxyl group; requires a central core of homology in the junction. The consensus cleavage sequence is 5'-(A/T)TT(C/G)-3'. Cleavage occurs on the 3'-side of the TT dinucleotide at the point of strand exchange. HJ branch migration catalyzed by RuvA-RuvB allows RuvC to scan DNA until it finds its consensus sequence, where it cleaves and resolves the cruciform DNA. This chain is Crossover junction endodeoxyribonuclease RuvC, found in Dichelobacter nodosus (strain VCS1703A).